A 207-amino-acid chain; its full sequence is Ribosomal RNA small subunit methyltransferase G (207 aa).

S-adenosyl-L-methionine is bound by residues Gly-77, Phe-82, 100–102, and Arg-141; that span reads ERS.

Belongs to the methyltransferase superfamily. RNA methyltransferase RsmG family.

It is found in the cytoplasm. In terms of biological role, specifically methylates the N7 position of a guanine in 16S rRNA. This chain is Ribosomal RNA small subunit methyltransferase G, found in Borrelia hermsii (strain HS1 / DAH).